The primary structure comprises 335 residues: Methionine aminopeptidase 1D, mitochondrial (335 aa).

The N-terminal 19 residues, 1–19, are a transit peptide targeting the mitochondrion; the sequence is MAAPIGVPLLVRGGCQRIL. His161 is a binding site for substrate. A divalent metal cation contacts are provided by Asp178, Asp189, and His252. Substrate is bound at residue His259. Glu284 and Glu315 together coordinate a divalent metal cation.

Belongs to the peptidase M24A family. Methionine aminopeptidase type 1 subfamily. Co(2+) is required as a cofactor. It depends on Zn(2+) as a cofactor. Requires Mn(2+) as cofactor. The cofactor is Fe(2+).

Its subcellular location is the mitochondrion. It carries out the reaction Release of N-terminal amino acids, preferentially methionine, from peptides and arylamides.. In terms of biological role, removes the N-terminal methionine from nascent proteins. The N-terminal methionine is often cleaved when the second residue in the primary sequence is small and uncharged (Met-Ala-, Cys, Gly, Pro, Ser, Thr, or Val). Requires deformylation of the N(alpha)-formylated initiator methionine before it can be hydrolyzed. This is Methionine aminopeptidase 1D, mitochondrial (Metap1d) from Mus musculus (Mouse).